The sequence spans 470 residues: Cyclin-dependent kinase E-1 (470 aa).

The Protein kinase domain maps to Y25–F333. ATP-binding positions include I31–V39 and K55. Y36 is subject to Phosphotyrosine. The active-site Proton acceptor is the D154. The disordered stretch occupies residues L428 to L470. Over residues V432–Q448 the composition is skewed to polar residues.

Belongs to the protein kinase superfamily. CMGC Ser/Thr protein kinase family. CDC2/CDKX subfamily. In terms of assembly, interacts with MED14, HDA19 and LUG. Interacts with KIN10. As to expression, expressed in roots, leaves and stems. Expressed in young dividing tissue, such as shoot and root tips, lateral root primordia, young leaves and flowers. Expressed in the inflorescence meristem, inflorescence stem and young flowers.

Its subcellular location is the nucleus. It catalyses the reaction L-seryl-[protein] + ATP = O-phospho-L-seryl-[protein] + ADP + H(+). The catalysed reaction is L-threonyl-[protein] + ATP = O-phospho-L-threonyl-[protein] + ADP + H(+). It carries out the reaction [DNA-directed RNA polymerase] + ATP = phospho-[DNA-directed RNA polymerase] + ADP + H(+). Involved in cell differentiation. Required for the specification of stamen and carpel identities and for the proper termination of stem cells in the floral meristem. In Arabidopsis thaliana (Mouse-ear cress), this protein is Cyclin-dependent kinase E-1 (CDKE-1).